The primary structure comprises 426 residues: Serine--tRNA ligase (426 aa).

Residue 233–235 (TAE) coordinates L-serine. Residue 264–266 (RSE) coordinates ATP. L-serine is bound at residue Glu-287. ATP is bound at residue 351–354 (EISS). L-serine is bound at residue Ser-387.

It belongs to the class-II aminoacyl-tRNA synthetase family. Type-1 seryl-tRNA synthetase subfamily. Homodimer. The tRNA molecule binds across the dimer.

It localises to the cytoplasm. It carries out the reaction tRNA(Ser) + L-serine + ATP = L-seryl-tRNA(Ser) + AMP + diphosphate + H(+). The catalysed reaction is tRNA(Sec) + L-serine + ATP = L-seryl-tRNA(Sec) + AMP + diphosphate + H(+). It functions in the pathway aminoacyl-tRNA biosynthesis; selenocysteinyl-tRNA(Sec) biosynthesis; L-seryl-tRNA(Sec) from L-serine and tRNA(Sec): step 1/1. In terms of biological role, catalyzes the attachment of serine to tRNA(Ser). Is also able to aminoacylate tRNA(Sec) with serine, to form the misacylated tRNA L-seryl-tRNA(Sec), which will be further converted into selenocysteinyl-tRNA(Sec). In Clostridium botulinum (strain Hall / ATCC 3502 / NCTC 13319 / Type A), this protein is Serine--tRNA ligase.